A 558-amino-acid chain; its full sequence is Outer membrane transporter CdiB (558 aa).

The signal sequence occupies residues 1-25 (MFVSSRKTGLIVCFSLIGYTASAFS). The stretch at 34 to 62 (NETQQRQSEVIEQSRQQREALQQLNNIVQ) forms a coiled coil. A POTRA domain is found at 76-151 (FTLREIRFNH…GVLQLEILEG (76 aa)).

This sequence belongs to the TPS (TC 1.B.20) family.

Its subcellular location is the cell outer membrane. Functionally, probable outer membrane protein component of a toxin-immunity protein module, which functions as a cellular contact-dependent growth inhibition (CDI) system. CDI modules allow bacteria to communicate with and inhibit the growth of closely related neighboring bacteria in a contact-dependent fashion. This protein may be required for secretion and assembly of the CdiA toxin. Probable member of a two partner secretion pathway (TPS) in which it mediates the secretion of CdiA. This Dickeya dadantii (strain 3937) (Erwinia chrysanthemi (strain 3937)) protein is Outer membrane transporter CdiB (cdiB).